The primary structure comprises 464 residues: Probable acid phosphatase DDB_G0284753 (464 aa).

The interval 1–29 (MFSYFRKSQQKVEENQNGGGGDGRGSGIK) is disordered. A compositionally biased stretch (gly residues) spans 17–26 (NGGGGDGRGS). Catalysis depends on His-81, which acts as the Nucleophile. The disordered stretch occupies residues 180 to 202 (SFTDEQEKSPHHSSFLVKPDNEE). Catalysis depends on Asp-347, which acts as the Proton donor.

Belongs to the histidine acid phosphatase family.

It carries out the reaction a phosphate monoester + H2O = an alcohol + phosphate. The polypeptide is Probable acid phosphatase DDB_G0284753 (Dictyostelium discoideum (Social amoeba)).